The sequence spans 879 residues: Alanine--tRNA ligase (879 aa).

Residues His567, His571, Cys669, and His673 each contribute to the Zn(2+) site.

This sequence belongs to the class-II aminoacyl-tRNA synthetase family. Zn(2+) serves as cofactor.

It localises to the cytoplasm. It carries out the reaction tRNA(Ala) + L-alanine + ATP = L-alanyl-tRNA(Ala) + AMP + diphosphate. In terms of biological role, catalyzes the attachment of alanine to tRNA(Ala) in a two-step reaction: alanine is first activated by ATP to form Ala-AMP and then transferred to the acceptor end of tRNA(Ala). Also edits incorrectly charged Ser-tRNA(Ala) and Gly-tRNA(Ala) via its editing domain. The chain is Alanine--tRNA ligase from Lactobacillus acidophilus (strain ATCC 700396 / NCK56 / N2 / NCFM).